We begin with the raw amino-acid sequence, 300 residues long: Porphobilinogen deaminase (300 aa).

The residue at position 239 (C239) is an S-(dipyrrolylmethanemethyl)cysteine.

It belongs to the HMBS family. Monomer. The cofactor is dipyrromethane.

It catalyses the reaction 4 porphobilinogen + H2O = hydroxymethylbilane + 4 NH4(+). It participates in porphyrin-containing compound metabolism; protoporphyrin-IX biosynthesis; coproporphyrinogen-III from 5-aminolevulinate: step 2/4. Its function is as follows. Tetrapolymerization of the monopyrrole PBG into the hydroxymethylbilane pre-uroporphyrinogen in several discrete steps. The polypeptide is Porphobilinogen deaminase (Francisella tularensis subsp. novicida (strain U112)).